A 283-amino-acid polypeptide reads, in one-letter code: 4-hydroxy-3-methylbut-2-enyl diphosphate reductase (283 aa).

Cys-12 is a binding site for [4Fe-4S] cluster. 2 residues coordinate (2E)-4-hydroxy-3-methylbut-2-enyl diphosphate: His-40 and His-72. Residues His-40 and His-72 each coordinate dimethylallyl diphosphate. Positions 40 and 72 each coordinate isopentenyl diphosphate. Cys-94 provides a ligand contact to [4Fe-4S] cluster. His-122 provides a ligand contact to (2E)-4-hydroxy-3-methylbut-2-enyl diphosphate. His-122 is a dimethylallyl diphosphate binding site. His-122 contacts isopentenyl diphosphate. Glu-124 functions as the Proton donor in the catalytic mechanism. Position 160 (Thr-160) interacts with (2E)-4-hydroxy-3-methylbut-2-enyl diphosphate. Cys-188 lines the [4Fe-4S] cluster pocket. The (2E)-4-hydroxy-3-methylbut-2-enyl diphosphate site is built by Ser-216, Asn-218, and Ser-259. Residues Ser-216, Asn-218, and Ser-259 each coordinate dimethylallyl diphosphate. Residues Ser-216, Asn-218, and Ser-259 each coordinate isopentenyl diphosphate.

Belongs to the IspH family. Requires [4Fe-4S] cluster as cofactor.

It carries out the reaction isopentenyl diphosphate + 2 oxidized [2Fe-2S]-[ferredoxin] + H2O = (2E)-4-hydroxy-3-methylbut-2-enyl diphosphate + 2 reduced [2Fe-2S]-[ferredoxin] + 2 H(+). It catalyses the reaction dimethylallyl diphosphate + 2 oxidized [2Fe-2S]-[ferredoxin] + H2O = (2E)-4-hydroxy-3-methylbut-2-enyl diphosphate + 2 reduced [2Fe-2S]-[ferredoxin] + 2 H(+). It functions in the pathway isoprenoid biosynthesis; dimethylallyl diphosphate biosynthesis; dimethylallyl diphosphate from (2E)-4-hydroxy-3-methylbutenyl diphosphate: step 1/1. Its pathway is isoprenoid biosynthesis; isopentenyl diphosphate biosynthesis via DXP pathway; isopentenyl diphosphate from 1-deoxy-D-xylulose 5-phosphate: step 6/6. Catalyzes the conversion of 1-hydroxy-2-methyl-2-(E)-butenyl 4-diphosphate (HMBPP) into a mixture of isopentenyl diphosphate (IPP) and dimethylallyl diphosphate (DMAPP). Acts in the terminal step of the DOXP/MEP pathway for isoprenoid precursor biosynthesis. The sequence is that of 4-hydroxy-3-methylbut-2-enyl diphosphate reductase from Dictyoglomus thermophilum (strain ATCC 35947 / DSM 3960 / H-6-12).